Reading from the N-terminus, the 274-residue chain is NADPH-dependent 7-cyano-7-deazaguanine reductase (274 aa).

80–82 (VES) contributes to the substrate binding site. 82–83 (SK) contacts NADPH. Cys-181 functions as the Thioimide intermediate in the catalytic mechanism. The active-site Proton donor is the Asp-188. 220–221 (HE) contacts substrate. An NADPH-binding site is contributed by 249–250 (RG).

It belongs to the GTP cyclohydrolase I family. QueF type 2 subfamily. Homodimer.

The protein localises to the cytoplasm. The catalysed reaction is 7-aminomethyl-7-carbaguanine + 2 NADP(+) = 7-cyano-7-deazaguanine + 2 NADPH + 3 H(+). The protein operates within tRNA modification; tRNA-queuosine biosynthesis. Its function is as follows. Catalyzes the NADPH-dependent reduction of 7-cyano-7-deazaguanine (preQ0) to 7-aminomethyl-7-deazaguanine (preQ1). This is NADPH-dependent 7-cyano-7-deazaguanine reductase from Burkholderia mallei (strain NCTC 10247).